The primary structure comprises 173 residues: Glycine cleavage system H protein, mitochondrial (173 aa).

Residues 1–48 (MALRVVRSVRALLCTLRAVPSPAAPCPPRPWQLGVGAVRTLRTGPALL) constitute a mitochondrion transit peptide. Residues 66 to 148 (IGTVGISNFA…YEDGWLIKMT (83 aa)) enclose the Lipoyl-binding domain. An N6-lipoyllysine modification is found at K107.

It belongs to the GcvH family. In terms of assembly, interacts with GLDC. The glycine cleavage system is composed of four proteins: P (GLDC), T (GCST), L (DLD) and H (GCSH). (R)-lipoate serves as cofactor.

Its subcellular location is the mitochondrion. Functionally, the glycine cleavage system catalyzes the degradation of glycine. The H protein (GCSH) shuttles the methylamine group of glycine from the P protein (GLDC) to the T protein (GCST). Has a pivotal role in the lipoylation of enzymes involved in cellular energetics such as the mitochondrial dihydrolipoyllysine-residue acetyltransferase component of pyruvate dehydrogenase complex (DLAT), and the mitochondrial dihydrolipoyllysine-residue succinyltransferase component of 2-oxoglutarate dehydrogenase complex (DLST). This chain is Glycine cleavage system H protein, mitochondrial, found in Homo sapiens (Human).